Reading from the N-terminus, the 1076-residue chain is Bifunctional glutamine synthetase adenylyltransferase/adenylyl-removing enzyme (1076 aa).

An adenylyl removase region spans residues 1–521 (MESSIFKPSS…LHLDIYYRPM (521 aa)). The interval 524–1076 (VNAQMENDQI…LERNRRRAQR (553 aa)) is adenylyl transferase. Over residues 1042–1056 (TATASAATQQPQTAP) the composition is skewed to low complexity. A disordered region spans residues 1042 to 1076 (TATASAATQQPQTAPRPRMHVIAPRLERNRRRAQR).

The protein belongs to the GlnE family. Requires Mg(2+) as cofactor.

The catalysed reaction is [glutamine synthetase]-O(4)-(5'-adenylyl)-L-tyrosine + phosphate = [glutamine synthetase]-L-tyrosine + ADP. It carries out the reaction [glutamine synthetase]-L-tyrosine + ATP = [glutamine synthetase]-O(4)-(5'-adenylyl)-L-tyrosine + diphosphate. Involved in the regulation of glutamine synthetase GlnA, a key enzyme in the process to assimilate ammonia. When cellular nitrogen levels are high, the C-terminal adenylyl transferase (AT) inactivates GlnA by covalent transfer of an adenylyl group from ATP to specific tyrosine residue of GlnA, thus reducing its activity. Conversely, when nitrogen levels are low, the N-terminal adenylyl removase (AR) activates GlnA by removing the adenylyl group by phosphorolysis, increasing its activity. The regulatory region of GlnE binds the signal transduction protein PII (GlnB) which indicates the nitrogen status of the cell. This Bifidobacterium longum (strain NCC 2705) protein is Bifunctional glutamine synthetase adenylyltransferase/adenylyl-removing enzyme.